The sequence spans 218 residues: Oxygen regulatory protein NreC (218 aa).

Positions 2 to 119 (KIVIADDHAV…QLILAVRTVY (118 aa)) constitute a Response regulatory domain. A 4-aspartylphosphate modification is found at aspartate 53. Residues 149-214 (SSDPFKILSK…ELVEYALKKK (66 aa)) form the HTH luxR-type domain. The H-T-H motif DNA-binding region spans 173-192 (NKDIAEKLFVSVKTVEAHKT).

Phosphorylated by NreB.

The protein resides in the cytoplasm. Member of the two-component regulatory system NreB/NreC involved in the control of dissimilatory nitrate/nitrite reduction in response to oxygen. Phosphorylated NreC binds to a GC-rich palindromic sequence at the promoters of the nitrate (narGHJI) and nitrite (nir) reductase operons, as well as the putative nitrate transporter gene narT, and activates their expression. This is Oxygen regulatory protein NreC (nreC) from Staphylococcus epidermidis (strain ATCC 35984 / DSM 28319 / BCRC 17069 / CCUG 31568 / BM 3577 / RP62A).